The primary structure comprises 470 residues: Zinc finger and BTB domain-containing protein 8A.1-A (470 aa).

The 69-residue stretch at 24–92 folds into the BTB domain; sequence CDCHIIVEGQ…VYSGKLPLSG (69 aa). The tract at residues 260 to 280 is disordered; it reads EDEDAASHSWPESPQQESLDQ. The span at 269–278 shows a compositional bias: polar residues; sequence WPESPQQESL. C2H2-type zinc fingers lie at residues 316-338 and 344-367; these read FKCP…LRCH and YPCE…QTIH. Residues 439–450 show a composition bias toward basic and acidic residues; that stretch reads GRKENGSERAES. The tract at residues 439-470 is disordered; the sequence is GRKENGSERAESDLAIQEVVDSEDDELKEKQD.

It is found in the nucleus. May be involved in transcriptional regulation. The protein is Zinc finger and BTB domain-containing protein 8A.1-A (zbtb8a.1-a) of Xenopus laevis (African clawed frog).